The chain runs to 130 residues: Small ribosomal subunit protein uS11 (130 aa).

This sequence belongs to the universal ribosomal protein uS11 family. Part of the 30S ribosomal subunit. Interacts with proteins S7 and S18. Binds to IF-3.

In terms of biological role, located on the platform of the 30S subunit, it bridges several disparate RNA helices of the 16S rRNA. Forms part of the Shine-Dalgarno cleft in the 70S ribosome. The sequence is that of Small ribosomal subunit protein uS11 from Xylella fastidiosa (strain M12).